The primary structure comprises 573 residues: L-lactate dehydrogenase (cytochrome) (573 aa).

The transit peptide at 1–73 (MFKSQLRTAT…LYQKDKFISA (73 aa)) directs the protein to the mitochondrion. The region spanning 80–157 (DIELTPEIVS…PPEKHLGPLV (78 aa)) is the Cytochrome b5 heme-binding domain. Heme b is bound by residues His-115, His-138, and Tyr-208. In terms of domain architecture, FMN hydroxy acid dehydrogenase spans 182-542 (PPLSQMINLH…TPELLDTRSI (361 aa)). Tyr-208 contributes to the pyruvate binding site. Residues 260–263 (SATA), Ser-290, and Gln-313 contribute to the FMN site. Position 315 (Tyr-315) interacts with pyruvate. Thr-341 lines the FMN pocket. Lys-357 is a binding site for heme b. Lys-408 lines the FMN pocket. Residues His-432 and Arg-435 each coordinate pyruvate. Residues 468-472 (DGGVR) and 491-492 (GR) each bind FMN.

This sequence in the N-terminal section; belongs to the cytochrome b5 family. The protein in the C-terminal section; belongs to the FMN-dependent alpha-hydroxy acid dehydrogenase family. Homotetramer. It depends on FMN as a cofactor. The cofactor is heme b.

Its subcellular location is the mitochondrion intermembrane space. The enzyme catalyses (S)-lactate + 2 Fe(III)-[cytochrome c] = 2 Fe(II)-[cytochrome c] + pyruvate + 2 H(+). Functionally, catalyzes the oxidation of (S)-lactate (L-lactate) to pyruvate with subsequent transfer of electrons to cytochrome c. Is involved in the utilization of (S)-lactate as a sole source of carbon for growth. The protein is L-lactate dehydrogenase (cytochrome) (CYB2) of Wickerhamomyces anomalus (Yeast).